Reading from the N-terminus, the 96-residue chain is Small ribosomal subunit protein bS6 (96 aa).

The protein belongs to the bacterial ribosomal protein bS6 family.

In terms of biological role, binds together with bS18 to 16S ribosomal RNA. The sequence is that of Small ribosomal subunit protein bS6 from Streptococcus equi subsp. zooepidemicus (strain MGCS10565).